The primary structure comprises 421 residues: NADH-quinone oxidoreductase subunit F (421 aa).

Residue 54–63 (GRGGAGFSTG) coordinates NAD(+). 166 to 213 (GAGAYICGEETALLESLEGKKGMPRLKPPFPAGFGLYGCPTTINNVES) contributes to the FMN binding site. Positions 344, 347, 350, and 390 each coordinate [4Fe-4S] cluster.

Belongs to the complex I 51 kDa subunit family. It depends on FMN as a cofactor. The cofactor is [4Fe-4S] cluster.

The catalysed reaction is a quinone + NADH + 5 H(+)(in) = a quinol + NAD(+) + 4 H(+)(out). Functionally, NDH-1 shuttles electrons from NADH, via FMN and iron-sulfur (Fe-S) centers, to quinones in the respiratory chain. Couples the redox reaction to proton translocation (for every two electrons transferred, four hydrogen ions are translocated across the cytoplasmic membrane), and thus conserves the redox energy in a proton gradient. The protein is NADH-quinone oxidoreductase subunit F (nuoF) of Rickettsia rickettsii (strain Sheila Smith).